Reading from the N-terminus, the 316-residue chain is HTH-type transcriptional regulator PecT (316 aa).

The HTH lysR-type domain maps to 11–68; sequence LDLDLLRTFVAVADLNTFAAAAVAVCRTQSAVSQQMQRLEQLIGKELFARHGRNKLLT. The H-T-H motif DNA-binding region spans 28–47; sequence FAAAAVAVCRTQSAVSQQMQ. The segment at 293-316 is disordered; that stretch reads LPVSTGTESELREPPTDESLKDIT. Residues 301–316 show a composition bias toward basic and acidic residues; sequence SELREPPTDESLKDIT.

This sequence belongs to the LysR transcriptional regulatory family.

Functionally, regulates pectinase gene expression. The chain is HTH-type transcriptional regulator PecT (pecT) from Dickeya dadantii (strain 3937) (Erwinia chrysanthemi (strain 3937)).